Here is a 388-residue protein sequence, read N- to C-terminus: Dual-specificity RNA methyltransferase RlmN (388 aa).

Glu-109 acts as the Proton acceptor in catalysis. Residues Glu-115 to Asp-354 enclose the Radical SAM core domain. An intrachain disulfide couples Cys-122 to Cys-359. The [4Fe-4S] cluster site is built by Cys-129, Cys-133, and Cys-136. S-adenosyl-L-methionine-binding positions include Gly-183–Glu-184, Ser-215, Ser-237–His-239, and Asn-316. Catalysis depends on Cys-359, which acts as the S-methylcysteine intermediate.

It belongs to the radical SAM superfamily. RlmN family. [4Fe-4S] cluster serves as cofactor.

The protein localises to the cytoplasm. It catalyses the reaction adenosine(2503) in 23S rRNA + 2 reduced [2Fe-2S]-[ferredoxin] + 2 S-adenosyl-L-methionine = 2-methyladenosine(2503) in 23S rRNA + 5'-deoxyadenosine + L-methionine + 2 oxidized [2Fe-2S]-[ferredoxin] + S-adenosyl-L-homocysteine. The catalysed reaction is adenosine(37) in tRNA + 2 reduced [2Fe-2S]-[ferredoxin] + 2 S-adenosyl-L-methionine = 2-methyladenosine(37) in tRNA + 5'-deoxyadenosine + L-methionine + 2 oxidized [2Fe-2S]-[ferredoxin] + S-adenosyl-L-homocysteine. Its function is as follows. Specifically methylates position 2 of adenine 2503 in 23S rRNA and position 2 of adenine 37 in tRNAs. m2A2503 modification seems to play a crucial role in the proofreading step occurring at the peptidyl transferase center and thus would serve to optimize ribosomal fidelity. The sequence is that of Dual-specificity RNA methyltransferase RlmN from Salmonella typhimurium (strain LT2 / SGSC1412 / ATCC 700720).